The primary structure comprises 152 residues: Transcriptional regulator MraZ (152 aa).

SpoVT-AbrB domains follow at residues 5 to 52 (ASAI…PADE) and 81 to 124 (AHEI…DEAQ).

The protein belongs to the MraZ family. Forms oligomers.

The protein localises to the cytoplasm. Its subcellular location is the nucleoid. The sequence is that of Transcriptional regulator MraZ from Shewanella amazonensis (strain ATCC BAA-1098 / SB2B).